The chain runs to 775 residues: MSDKDRIAQLLRELEEAKAREEEAKARAEEAKARAEEAKARAEEAKAREEEAKAREAQERCERERLQLEHRNTTFLEYLHNCHRHLYNALRLTNTSRYSTGYTKVVGKYYPKRLRPWTYFANVLHPHYFDLVQSICGQRQLFEPANTTKSLGTIISDHLAGNEKAIDRFEVDAVERPVQGILKVLATHKEAGKASICPEFRFSANLRELTQKDDGSSGADDNTSDGSLERRQQAGPNKRPTSKRKYICSNRQPDGVGIRMQPGGGQTHAFIYDYKAAHKVAIEYIRSATAKEHLFHEVVARINDDKLSRDEEVQRREQAEALIAMALTQVFDYMITYGVSYGYVAAGRCLLLLYVDRDDWQTLYCHPCLPADDVGEPTNDWTDRLSHTAVAQLISFCLSSFQSEALEGQSLETALSIAKATLKTWSESYADVAYLGLEPAELSSAPSSQNTDISEYTSKAEPTGRNVALRSQSSCKPAAVLPQSNEHDDEEDHSEPGASRLRLAANKRKRGPSSGGEDGDIAMADSGPTKQYCTQACLLGLKRGKDLDEKCPNVSLHRFDGSSRHPVNAHRFTDMVEQQLLLSPYKGCRMVDFWGKRGAMGWLFKLELLPYGYTFVGKGTLEDRLSRLEHEGRVYAQLDHLQGDVVPVYLGLVRLDRGYILPGLEFVVHMMLMSWAGQTPSASMDDAETLKRESLTAIWNEGVVHGDENRANYLWNAERGRIMIIDFDRAHLSPPPKPRAVSRLSKPKRKRGDSEADAQLFGPLEINRSKHRIRT.

A coiled-coil region spans residues 4 to 69 (KDRIAQLLRE…RCERERLQLE (66 aa)). Disordered stretches follow at residues 18-51 (KARE…REEE), 211-249 (QKDD…YICS), 442-525 (LSSA…AMAD), and 734-761 (PPPK…AQLF). Residues 444–457 (SAPSSQNTDISEYT) are compositionally biased toward polar residues.

The protein localises to the cytoplasm. It is found in the nucleus. In terms of biological role, promotes unequal transmission of alleles from the parental zygote to progeny spores by acting as poison/antidote system, leading to poisoning of progeny that do not inherit the allele. May possess DNA nuclease activity that leads to spore killing, and a kinase activity that confers resistance to the nuclease activity. The chain is Meiotic driver SPOK2 from Podospora anserina (strain S / ATCC MYA-4624 / DSM 980 / FGSC 10383) (Pleurage anserina).